A 186-amino-acid polypeptide reads, in one-letter code: Casparian strip membrane protein 5 (186 aa).

Residues 1–23 (MEHGEISSKAPLVAPVAAGVNRA) are Cytoplasmic-facing. The chain crosses the membrane as a helical span at residues 24 to 44 (VAVVDTFLRFIAIIGTIGSAI). The Extracellular segment spans residues 45-73 (AMGTTNETLPFFTQFIQFEAKYSDLPSFT). N-linked (GlcNAc...) asparagine glycosylation is present at N50. A helical membrane pass occupies residues 74 to 94 (FFVAANAVVCTYLVLSIPLSI). At 95 to 106 (VHILRPRARYSR) the chain is on the cytoplasmic side. The helical transmembrane segment at 107 to 127 (LFLVFFDTAMLALLTAGASAA) threads the bilayer. Residues 128–160 (AAIVYLAHKGNVRANWFSICQQFDSFCERISGS) lie on the Extracellular side of the membrane. Residues 161–181 (LIGSFAAMVLLVVLITLSAFA) form a helical membrane-spanning segment. Over 182–186 (LARRH) the chain is Cytoplasmic.

Belongs to the Casparian strip membrane proteins (CASP) family. In terms of assembly, homodimer and heterodimers.

Its subcellular location is the cell membrane. Its function is as follows. Regulates membrane-cell wall junctions and localized cell wall deposition. Required for establishment of the Casparian strip membrane domain (CSD) and the subsequent formation of Casparian strips, a cell wall modification of the root endodermis that determines an apoplastic barrier between the intraorganismal apoplasm and the extraorganismal apoplasm and prevents lateral diffusion. The chain is Casparian strip membrane protein 5 from Oryza sativa subsp. japonica (Rice).